Reading from the N-terminus, the 433-residue chain is Arabinooligosaccharide-binding protein (433 aa).

A signal peptide spans 1–21 (MKKMTVCFLVLMMLLTLVIAG). C22 carries the N-palmitoyl cysteine lipid modification. Residue C22 is the site of S-diacylglycerol cysteine attachment.

The protein belongs to the bacterial solute-binding protein 1 family. In terms of assembly, the complex is composed of two ATP-binding proteins (MsmX), two transmembrane proteins (AraP and AraQ) and a solute-binding protein (AraN).

It is found in the cell membrane. In terms of biological role, part of the ABC transporter complex AraNPQ involved in the uptake of arabinooligosaccharides. Transports alpha-1,5-arabinooligosaccharides, at least up to four L-arabinosyl units. AraN captures the substrate and delivers it to the two transmembrane components. The polypeptide is Arabinooligosaccharide-binding protein (Bacillus subtilis (strain 168)).